The chain runs to 372 residues: Cyclin-J (372 aa).

The Cyclin N-terminal domain occupies 15–143 (DIHQALRYKE…LLETFQWNLC (129 aa)).

Belongs to the cyclin family.

The chain is Cyclin-J (CCNJ) from Homo sapiens (Human).